The primary structure comprises 427 residues: GPI mannosyltransferase 2 (427 aa).

8 helical membrane-spanning segments follow: residues 7 to 27 (LTTV…FAPG), 119 to 139 (ATLL…ALTL), 164 to 184 (FLLA…GMLL), 197 to 217 (ITLA…FSVA), 247 to 267 (AVLF…YMHY), 318 to 338 (VPNF…TVYF), 350 to 370 (LVYI…VQII), and 404 to 424 (LYVN…ACFL).

This sequence belongs to the PIGV family.

The protein localises to the endoplasmic reticulum membrane. It participates in glycolipid biosynthesis; glycosylphosphatidylinositol-anchor biosynthesis. Mannosyltransferase involved in glycosylphosphatidylinositol-anchor biosynthesis. Transfers the second mannose to the glycosylphosphatidylinositol during GPI precursor assembly. The polypeptide is GPI mannosyltransferase 2 (GPI18) (Eremothecium gossypii (strain ATCC 10895 / CBS 109.51 / FGSC 9923 / NRRL Y-1056) (Yeast)).